Reading from the N-terminus, the 76-residue chain is Mu-scoloptoxin(15)-Ssm1a (76 aa).

An N-terminal signal peptide occupies residues 1–23 (MEKKIIFLVFLVALLALPGFIST). Positions 33 to 36 (KKRK) are important for inhibition of KCNQ4. Intrachain disulfides connect C43–C69 and C47–C71.

Belongs to the scoloptoxin-15 family. As to expression, expressed by the venom gland.

Its subcellular location is the secreted. Its function is as follows. Blocks voltage-gated potassium channels Kv7.4/KCNQ4 (IC(50)=2.5 uM), Kv7.1/KCNQ1 (IC(50)=2.8 uM), Kv7.2/KCNQ2 (IC(50)=2.7 uM) and Kv7.5/KCNQ5 (IC(50)=2.7 uM). Targets the pore domain, in particular negatively charged residues 'Asp-266' and 'Asp-288', of KCNQ4 and probably other KCNQ channel family members where these residues are conserved. In vivo, shows vasoconstrictive activity resulting in acute hypertension when injected intravenously in mice. Also induces coronary vasospasms ultimately leading to heart failure. Induces seizures when injected into the hippocampus of mice. Decreases respiratory rate while increasing respiratory amplitude, probably by triggering a contraction of the bronchial ring. The protein is Mu-scoloptoxin(15)-Ssm1a of Scolopendra mutilans (Chinese red-headed centipede).